The primary structure comprises 174 residues: Probable nicotinate-nucleotide adenylyltransferase (174 aa).

Belongs to the NadD family.

The enzyme catalyses nicotinate beta-D-ribonucleotide + ATP + H(+) = deamido-NAD(+) + diphosphate. It functions in the pathway cofactor biosynthesis; NAD(+) biosynthesis; deamido-NAD(+) from nicotinate D-ribonucleotide: step 1/1. Its function is as follows. Catalyzes the reversible adenylation of nicotinate mononucleotide (NaMN) to nicotinic acid adenine dinucleotide (NaAD). This is Probable nicotinate-nucleotide adenylyltransferase from Helicobacter pylori (strain HPAG1).